We begin with the raw amino-acid sequence, 512 residues long: MTQFITHKWLAALGLASSIAAFPALAAKDVVVAVGSNFTTLDPYDANDTLSQAVAKSFYQGLFGLDKDMKVKNVLAEGYTVSDDGLTYTITLRQGVKFQDGADFNAAAVKANLDRASNPDNHLKRYNLYKNIAKTEVVDPATVKITLKQPFSAFINILAHPATAMISPQALEKYGKDIGFHPVGTGPYQLETWNQTDFVKVKKFAGYWQQGLPKLDSITWRPVTDNNTRAAMLQTGEAQFAFPIPYEQAALLAKNKNLELVASPSIMQRYISMNVTQKPFDNPKVREALNYAINRQALVKVAFAGYATPATGVVPPSIAYAQSYQPWPYDPAKARELLKEAGYPDGFSTTLWSSHNHSTAQKVLQFTQQQLAQIGIKARITAMDAGQRAAEVEGKGQKESGVRMFYTGWSASTGEADWALSPLFASQNWPPTQFNTAFYSNKQVDSDLAAALKTNDPQEKTRLYKEAQDIIWKESPWIPLVVEKLVSAHSKNLTGFWIMPDTGFSFDDADLK.

The N-terminal stretch at Met1 to Ala26 is a signal peptide.

Belongs to the bacterial solute-binding protein 5 family. As to quaternary structure, the complex is composed of two ATP-binding proteins (GsiA), two transmembrane proteins (GsiC and GsiD) and a solute-binding protein (GsiB).

It localises to the periplasm. Its function is as follows. Part of the ABC transporter complex GsiABCD involved in glutathione import. Binds glutathione. This is Glutathione-binding protein GsiB from Salmonella typhi.